The primary structure comprises 1270 residues: MDSLEEPQKKVFKARKTMRVSDRQQLEAVYKVKEELLKTDVKLLNGNHENGDLDPTSPLENMDYIKDKEEVNGIEEICFDPEGSKAEWKETPCILSVNVKNKQDDDLNCEPLSPHNITPEPVSKLPAEPVSGDPAPGDLDAGDPASGVLASGDSTSGDPTSSEPSSSDAASGDATSGDAPSGDVSPGDATSGDATADDLSSGDPTSSDPIPGEPVPVEPISGDCAADDIASSEITSVDLASGAPASTDPASDDLASGDLSSSELASDDLATGELASDELTSESTFDRTFEPKSVPVCEPVPEIDNIEPSSNKDDDFLEKNGADEKLEQIQSKDSLDEKNKADNNIDANEETLETDDTTICSDRPPENEKKVEEDIITELALGEDAISSSMEIDQGEKNEDETSADLVETINENVIEDNKSENILENTDSMETDEIIPILEKLAPSEDELTCFSKTSLLPIDETNPDLEEKMESSFGSPSKQESSESLPKEAFLVLSDEEDISGEKDESEVISQNETCSPAEVESNEKDNKPEEEEQVIHEDDERPSEKNEFSRRKRSKSEDMDNVQSKRRRYMEEEYEAEFQVKITAKGDINQKLQKVIQWLLEEKLCALQCAVFDKTLAELKTRVEKIECNKRHKTVLTELQAKIARLTKRFEAAKEDLKKRHEHPPNPPVSPGKTVNDVNSNNNMSYRNAGTVRQMLESKRNVSESAPPSFQTPVNTVSSTNLVTPPAVVSSQPKLQTPVTSGSLTATSVLPAPNTATVVATTQVPSGNPQPTISLQPLPVILHVPVAVSSQPQLLQSHPGTLVTNQPSGNVEFISVQSPPTVSGLTKNPVSLPSLPNPTKPNNVPSVPSPSIQRNPTASAAPLGTTLAVQAVPTAHSIVQATRTSLPTVGPSGLYSPSTNRGPIQMKIPISAFSTSSAAEQNSNTTPRIENQTNKTIDASVSKKAADSTSQCGKATGSDSSGVIDLTMDDEESGASQDPKKLNHTPVSTMSSSQPVSRPLQPIQPAPPLQPSGVPTSGPSQTTIHLLPTAPTTVNVTHRPVTQVTTRLPVPRAPANHQVVYTTLPAPPAQAPLRGTVMQAPAVRQVNPQNSVTVRVPQTTTYVVNNGLTLGSTGPQLTVHHRPPQVHTEPPRPVHPAPLPEAPQPQRLPPEAASTSLPQKPHLKLARVQSQNGIVLSWSVLEVDRSCATVDSYHLYAYHEEPSATVPSQWKKIGEVKALPLPMACTLTQFVSGSKYYFAVRAKDIYGRFGPFCDPQSTDVISSTQSS.

The residue at position 1 (methionine 1) is an N-acetylmethionine. Residue lysine 33 forms a Glycyl lysine isopeptide (Lys-Gly) (interchain with G-Cter in SUMO2) linkage. Phosphoserine occurs at positions 57 and 113. Disordered stretches follow at residues 104–223 and 235–402; these read DDDL…ISGD and TSVD…EDET. Phosphothreonine is present on threonine 118. Low complexity-rich tracts occupy residues 132-203 and 248-269; these read GDPA…SSGD and DPAS…SDDL. Basic and acidic residues-rich tracts occupy residues 310 to 327 and 333 to 343; these read SNKD…EKLE and DSLDEKNKADN. Residues 347-356 are compositionally biased toward acidic residues; sequence ANEETLETDD. Basic and acidic residues predominate over residues 363 to 373; sequence RPPENEKKVEE. Phosphoserine is present on residues serine 445, serine 473, serine 474, serine 477, serine 479, and serine 496. Disordered regions lie at residues 455-570, 658-685, 822-862, and 886-906; these read TSLL…SKRR, EDLK…NSNN, PPTV…PTAS, and RTSL…NRGP. The span at 474-486 shows a compositional bias: polar residues; that stretch reads SFGSPSKQESSES. Residues 496–509 are compositionally biased toward acidic residues; it reads SDEEDISGEKDESE. Over residues 524 to 552 the composition is skewed to basic and acidic residues; that stretch reads SNEKDNKPEEEEQVIHEDDERPSEKNEFS. The Nuclear localization signal signature appears at 553-571; that stretch reads RRKRSKSEDMDNVQSKRRR. A Glycyl lysine isopeptide (Lys-Gly) (interchain with G-Cter in SUMO2) cross-link involves residue lysine 558. Serine 559 is subject to Phosphoserine. Residues 562–817 are interaction with SETDB1; that stretch reads MDNVQSKRRR…NQPSGNVEFI (256 aa). The stretch at 617–665 forms a coiled coil; that stretch reads KTLAELKTRVEKIECNKRHKTVLTELQAKIARLTKRFEAAKEDLKKRHE. Serine 673 is subject to Phosphoserine. The span at 822-834 shows a compositional bias: polar residues; sequence PPTVSGLTKNPVS. Residues 843–854 show a composition bias toward low complexity; it reads KPNNVPSVPSPS. At serine 899 the chain carries Phosphoserine. Residues lysine 910 and lysine 938 each participate in a glycyl lysine isopeptide (Lys-Gly) (interchain with G-Cter in SUMO2) cross-link. Composition is skewed to polar residues over residues 918–942 and 950–964; these read TSSA…TIDA and DSTS…SDSS. Disordered stretches follow at residues 918-1026 and 1115-1160; these read TSSA…SQTT and STGP…STSL. Positions 965–975 are interaction with SUMO; sequence GVIDLTMDDEE. Polar residues-rich tracts occupy residues 988-999 and 1016-1026; these read TPVSTMSSSQPV and GVPTSGPSQTT. Residues 1134-1151 are compositionally biased toward pro residues; the sequence is PRPVHPAPLPEAPQPQRL. The interaction with MBD1 stretch occupies residues 1154–1270; it reads EAASTSLPQK…TDVISSTQSS (117 aa). In terms of domain architecture, Fibronectin type-III spans 1160–1270; the sequence is LPQKPHLKLA…TDVISSTQSS (111 aa).

It belongs to the MCAF family. In terms of assembly, interacts with MBD1; the interaction is enhanced when MBD1 is sumoylated. Interacts with SETDB1; the interaction protects SETDB1 from proteasomal degradation and is required to stimulate histone methyltransferase activity and facilitate the conversion of dimethylated to trimethylated H3 'Lys-9'. Interacts with SUMO ubiquitin-like proteins (SUMO1, SUNO2 and SUMO3), with a preference for SUMO2 and SUMO3. Interacts with SP1, ATF7 and ZHX1. Interacts with the general transcription machinery, including ERCC2, ERCC3, GTF2E1, GTF2E2 and POLR2A. As to quaternary structure, (Microbial infection) Interacts with Epstein-Barr virus BRLF1/Rta protein, leading to the regulation of host genes in Epstein-Barr virus-infected cells. In terms of tissue distribution, detected at low levels in breast, lung and stomach; highly up-regulated in the corresponding cancerous tissues (at protein level).

It is found in the nucleus. Its function is as follows. Recruiter that couples transcriptional factors to general transcription apparatus and thereby modulates transcription regulation and chromatin formation. Can both act as an activator or a repressor depending on the context. Required for HUSH-mediated heterochromatin formation and gene silencing. Mediates MBD1-dependent transcriptional repression, probably by recruiting complexes containing SETDB1. Stabilizes SETDB1, is required to stimulate histone methyltransferase activity of SETDB1 and facilitates the conversion of dimethylated to trimethylated H3 'Lys-9' (H3K9me3). The complex formed with MBD1 and SETDB1 represses transcription and couples DNA methylation and histone H3 'Lys-9' trimethylation (H3K9me3). Facilitates telomerase TERT and TERC gene expression by SP1 in cancer cells. In Homo sapiens (Human), this protein is Activating transcription factor 7-interacting protein 1.